We begin with the raw amino-acid sequence, 86 residues long: Putative membrane protein insertion efficiency factor (86 aa).

This sequence belongs to the UPF0161 family.

It is found in the cell inner membrane. Its function is as follows. Could be involved in insertion of integral membrane proteins into the membrane. This Haemophilus influenzae (strain 86-028NP) protein is Putative membrane protein insertion efficiency factor.